A 232-amino-acid polypeptide reads, in one-letter code: Ornithine carbamoyltransferase (232 aa).

Residues Gln15, Arg39, and 66-69 contribute to the carbamoyl phosphate site; that span reads HPTQ. Residues Asn99, Asp163, and 167 to 168 contribute to the L-ornithine site; that span reads SM. Carbamoyl phosphate is bound by residues 204–207 and Thr232; that span reads HCLP.

The protein belongs to the aspartate/ornithine carbamoyltransferase superfamily. OTCase family.

It is found in the cytoplasm. The catalysed reaction is carbamoyl phosphate + L-ornithine = L-citrulline + phosphate + H(+). It participates in amino-acid biosynthesis; L-arginine biosynthesis; L-arginine from L-ornithine and carbamoyl phosphate: step 1/3. Functionally, reversibly catalyzes the transfer of the carbamoyl group from carbamoyl phosphate (CP) to the N(epsilon) atom of ornithine (ORN) to produce L-citrulline. In Neisseria sicca, this protein is Ornithine carbamoyltransferase (argF).